A 434-amino-acid chain; its full sequence is Chaperone SurA (434 aa).

The signal sequence occupies residues 1 to 22; sequence MKPSKHLIFALFALAISQPTMA. 2 PpiC domains span residues 173 to 274 and 283 to 383; these read DVEY…KIMD and IEEV…QLEE.

The protein localises to the periplasm. It catalyses the reaction [protein]-peptidylproline (omega=180) = [protein]-peptidylproline (omega=0). In terms of biological role, chaperone involved in the correct folding and assembly of outer membrane proteins. Recognizes specific patterns of aromatic residues and the orientation of their side chains, which are found more frequently in integral outer membrane proteins. May act in both early periplasmic and late outer membrane-associated steps of protein maturation. The sequence is that of Chaperone SurA from Shewanella sp. (strain MR-7).